The chain runs to 398 residues: Serpin-ZX (398 aa).

An RCL region spans residues 342–366; it reads GTEAAARTARVVTLRSLPVEPVKVD.

This sequence belongs to the serpin family. Expressed in roots, coleoptiles, shoots, leaves, embryo and endosperm.

In terms of biological role, inhibits chymotrypsin, cathepsin G and trypsin in vitro. The polypeptide is Serpin-ZX (PAZX) (Hordeum vulgare (Barley)).